The primary structure comprises 131 residues: MATDRRVSRVSSLIKREVSQMLLHGIKDDRVGAGMVSITDVDVSGDLQHAKIFVSIYGTEQAKAETMEGLKSSVGFVRRELGQRIRLRRTPEVVFLEDTSLERGDRTLHLLNQLQDARKEEDEYIEPAQDD.

Belongs to the RbfA family. As to quaternary structure, monomer. Binds 30S ribosomal subunits, but not 50S ribosomal subunits or 70S ribosomes.

It localises to the cytoplasm. Functionally, one of several proteins that assist in the late maturation steps of the functional core of the 30S ribosomal subunit. Associates with free 30S ribosomal subunits (but not with 30S subunits that are part of 70S ribosomes or polysomes). Required for efficient processing of 16S rRNA. May interact with the 5'-terminal helix region of 16S rRNA. This is Ribosome-binding factor A from Gloeothece citriformis (strain PCC 7424) (Cyanothece sp. (strain PCC 7424)).